The following is a 366-amino-acid chain: Neuropeptide Y receptor type 1 (366 aa).

Residues 1-39 lie on the Extracellular side of the membrane; sequence MNFSTYFENLSVPNNISGNITFPISEDCALPLPMIFTLA. N-linked (GlcNAc...) asparagine glycosylation is found at Asn-2, Asn-9, and Asn-15. Residues 40–60 traverse the membrane as a helical segment; sequence LAYGAVIILGLSGNLALIIII. Over 61-82 the chain is Cytoplasmic; it reads LKQKEMRNVTNILIVNLSFSDL. A helical transmembrane segment spans residues 83-103; it reads LATIMCLPFTLIYTLMDHWIF. The Extracellular portion of the chain corresponds to 104-111; sequence GEVMCKLN. The cysteines at positions 108 and 193 are disulfide-linked. Residues 112–132 form a helical membrane-spanning segment; sequence EYIQCVSVTVSIFSLVLIAIE. Topologically, residues 133–149 are cytoplasmic; the sequence is RHQLIINPRGWRPNNRH. A helical transmembrane segment spans residues 150–170; that stretch reads ACFGITVIWGFAMACSTPLMM. Residues 171 to 203 are Extracellular-facing; the sequence is YSVLTDEPFKNISLDSYIGKYVCLEDFPEDKFR. Asn-181 carries an N-linked (GlcNAc...) asparagine glycan. The chain crosses the membrane as a helical span at residues 204–224; sequence LSYTTLLFILQYLGPLCFIFV. Topologically, residues 225 to 260 are cytoplasmic; the sequence is CYTKIFLRLKRRNNMMDKIRDNKYRSSETKRINIML. Residues 261-281 traverse the membrane as a helical segment; that stretch reads LSIVVGFALCWLPFFIFNLVF. Residues 282–294 lie on the Extracellular side of the membrane; that stretch reads DWNHEAVATCNHN. Residues 295–315 traverse the membrane as a helical segment; the sequence is LLFLICHLTAMISTCVNPIFY. Residues 316–366 lie on the Cytoplasmic side of the membrane; the sequence is GFLNKNFQRDLQFFFNFCDFRSREDDYETIAMSTMHTDVSKTSLKQASPIA. Cys-333 carries S-palmitoyl cysteine lipidation.

The protein belongs to the G-protein coupled receptor 1 family.

The protein resides in the cell membrane. Its function is as follows. Receptor for neuropeptide Y and peptide YY. In Xenopus laevis (African clawed frog), this protein is Neuropeptide Y receptor type 1 (npy1r).